Reading from the N-terminus, the 141-residue chain is Large ribosomal subunit protein uL11 (141 aa).

The protein belongs to the universal ribosomal protein uL11 family. Part of the ribosomal stalk of the 50S ribosomal subunit. Interacts with L10 and the large rRNA to form the base of the stalk. L10 forms an elongated spine to which L12 dimers bind in a sequential fashion forming a multimeric L10(L12)X complex. In terms of processing, one or more lysine residues are methylated.

In terms of biological role, forms part of the ribosomal stalk which helps the ribosome interact with GTP-bound translation factors. This Selenomonas ruminantium protein is Large ribosomal subunit protein uL11.